We begin with the raw amino-acid sequence, 907 residues long: Schlafen family member 13 (907 aa).

Residues 1–353 (MEIHPSLVVE…WVRMMVDIGP (353 aa)) are n'-domain region. Residues Glu-205 and Glu-210 contribute to the active site. Zn(2+) is bound by residues His-281, Cys-283, and Cys-318. 604 to 611 (GMPGSGKT) serves as a coordination point for ATP.

Belongs to the Schlafen family. Subgroup III subfamily. Requires Mg(2+) as cofactor.

It is found in the cytoplasm. Endoribonuclease that cleaves tRNAs and rRNAs. Cleaves tRNAs 11 nucleotides from the 3'-terminus at the acceptor stem. Does not act on tRNA(Sec). The sequence is that of Schlafen family member 13 from Rattus norvegicus (Rat).